A 58-amino-acid chain; its full sequence is Small ribosomal subunit protein bS21 (58 aa).

This sequence belongs to the bacterial ribosomal protein bS21 family.

The polypeptide is Small ribosomal subunit protein bS21 (Lactobacillus johnsonii (strain CNCM I-12250 / La1 / NCC 533)).